The primary structure comprises 470 residues: Sulfate adenylyltransferase subunit 1 (470 aa).

In terms of domain architecture, tr-type G spans 22–237 (KEVLRFITCG…LEEVPVKSEE (216 aa)). Positions 31 to 38 (GSVDDGKS) are G1. 31–38 (GSVDDGKS) lines the GTP pocket. The interval 89 to 93 (GITID) is G2. The G3 stretch occupies residues 110-113 (DTPG). Residues 110 to 114 (DTPGH) and 165 to 168 (NKMD) each bind GTP. Residues 165-168 (NKMD) form a G4 region. Residues 202 to 204 (SAK) form a G5 region.

Belongs to the TRAFAC class translation factor GTPase superfamily. Classic translation factor GTPase family. CysN/NodQ subfamily. As to quaternary structure, heterodimer composed of CysD, the smaller subunit, and CysN.

It catalyses the reaction sulfate + ATP + H(+) = adenosine 5'-phosphosulfate + diphosphate. Its pathway is sulfur metabolism; hydrogen sulfide biosynthesis; sulfite from sulfate: step 1/3. Its function is as follows. With CysD forms the ATP sulfurylase (ATPS) that catalyzes the adenylation of sulfate producing adenosine 5'-phosphosulfate (APS) and diphosphate, the first enzymatic step in sulfur assimilation pathway. APS synthesis involves the formation of a high-energy phosphoric-sulfuric acid anhydride bond driven by GTP hydrolysis by CysN coupled to ATP hydrolysis by CysD. This Methylorubrum populi (strain ATCC BAA-705 / NCIMB 13946 / BJ001) (Methylobacterium populi) protein is Sulfate adenylyltransferase subunit 1.